Consider the following 630-residue polypeptide: Probable potassium transport system protein Kup 2 (630 aa).

Helical transmembrane passes span 14-34 (ATGF…DIGT), 56-76 (VIVL…VTAK), 108-128 (VPLL…SMIT), 145-165 (PALQ…LFAF), 176-196 (AFGP…LLHI), 214-234 (FMLS…LAVT), 255-275 (WLFF…AMVL), 293-313 (LLVP…QAVI), 352-372 (MLLL…SALA), 375-395 (YGIA…VVVW), 402-422 (PAAA…FFSA), and 427-447 (LMEG…LVWT).

It belongs to the HAK/KUP transporter (TC 2.A.72) family.

The protein resides in the cell inner membrane. It carries out the reaction K(+)(in) + H(+)(in) = K(+)(out) + H(+)(out). In terms of biological role, transport of potassium into the cell. Likely operates as a K(+):H(+) symporter. The protein is Probable potassium transport system protein Kup 2 of Rhodopseudomonas palustris (strain BisA53).